The following is a 442-amino-acid chain: Aspartate--tRNA(Asp/Asn) ligase (442 aa).

Residue E172 participates in L-aspartate binding. The aspartate stretch occupies residues 194-197; the sequence is QFYK. Residue R216 participates in L-aspartate binding. Residues 216 to 218, 224 to 226, and E365 contribute to the ATP site; these read RAE and RHL. Residues E365 and T368 each coordinate Mg(2+). Residues T368 and R372 each coordinate L-aspartate. An ATP-binding site is contributed by 413–416; it reads GLER.

Belongs to the class-II aminoacyl-tRNA synthetase family. Type 2 subfamily. Homodimer. Mg(2+) is required as a cofactor.

It is found in the cytoplasm. The catalysed reaction is tRNA(Asx) + L-aspartate + ATP = L-aspartyl-tRNA(Asx) + AMP + diphosphate. In terms of biological role, aspartyl-tRNA synthetase with relaxed tRNA specificity since it is able to aspartylate not only its cognate tRNA(Asp) but also tRNA(Asn). Reaction proceeds in two steps: L-aspartate is first activated by ATP to form Asp-AMP and then transferred to the acceptor end of tRNA(Asp/Asn). The sequence is that of Aspartate--tRNA(Asp/Asn) ligase (aspS) from Aeropyrum pernix (strain ATCC 700893 / DSM 11879 / JCM 9820 / NBRC 100138 / K1).